The sequence spans 114 residues: Putative movement protein (114 aa).

A helical transmembrane segment spans residues 27–47 (LIGIILLVTVCLTVLWVCIML). The tract at residues 79 to 114 (RTPFEATGPERERNWEARRQSTTVNPASQPNTGSVF) is disordered. A compositionally biased stretch (basic and acidic residues) spans 86–97 (GPERERNWEARR). Residues 98–114 (QSTTVNPASQPNTGSVF) show a composition bias toward polar residues.

The protein belongs to the nanovirus movement protein family.

Its subcellular location is the host cell membrane. Functionally, may transport viral genome to neighboring plant cells directly through plasmosdesmata, without any budding. The movement protein allows efficient cell to cell propagation, by bypassing the host cell wall barrier. The protein is Putative movement protein (DNA-M) of Faba bean necrotic yellows virus (isolate Egyptian EV1-93) (FBNYV).